Consider the following 566-residue polypeptide: Malate synthase, glyoxysomal (566 aa).

Arginine 179 (proton acceptor) is an active-site residue. The Proton donor role is filled by aspartate 465. The Microbody targeting signal signature appears at 564-566 (SRL).

This sequence belongs to the malate synthase family.

It localises to the glyoxysome. The enzyme catalyses glyoxylate + acetyl-CoA + H2O = (S)-malate + CoA + H(+). It participates in carbohydrate metabolism; glyoxylate cycle; (S)-malate from isocitrate: step 2/2. The protein is Malate synthase, glyoxysomal (MLS) of Raphanus sativus (Radish).